Here is a 236-residue protein sequence, read N- to C-terminus: Purine nucleoside phosphorylase DeoD-type 2 (236 aa).

Residue His5 participates in a purine D-ribonucleoside binding. Residues Gly21, Arg25, Arg44, and 88–91 (RVGS) each bind phosphate. A purine D-ribonucleoside-binding positions include 180-182 (DME) and 204-205 (SD). The Proton donor role is filled by Asp205.

The protein belongs to the PNP/UDP phosphorylase family. Homohexamer; trimer of homodimers.

The enzyme catalyses a purine D-ribonucleoside + phosphate = a purine nucleobase + alpha-D-ribose 1-phosphate. It catalyses the reaction a purine 2'-deoxy-D-ribonucleoside + phosphate = a purine nucleobase + 2-deoxy-alpha-D-ribose 1-phosphate. Functionally, catalyzes the reversible phosphorolytic breakdown of the N-glycosidic bond in the beta-(deoxy)ribonucleoside molecules, with the formation of the corresponding free purine bases and pentose-1-phosphate. This chain is Purine nucleoside phosphorylase DeoD-type 2, found in Vibrio vulnificus (strain CMCP6).